Here is a 92-residue protein sequence, read N- to C-terminus: N(2)-fixation sustaining protein CowN (92 aa).

It belongs to the CowN family.

In terms of biological role, is required to sustain N(2)-dependent growth in the presence of low levels of carbon monoxide (CO). Probably acts by protecting the N(2) fixation ability of the nitrogenase complex, which is inactivated in the presence of CO. This is N(2)-fixation sustaining protein CowN from Rhodopseudomonas palustris (strain HaA2).